The chain runs to 122 residues: Large ribosomal subunit protein uL14c (122 aa).

This sequence belongs to the universal ribosomal protein uL14 family. Part of the 50S ribosomal subunit.

The protein resides in the plastid. The protein localises to the chloroplast. Binds to 23S rRNA. The chain is Large ribosomal subunit protein uL14c from Lotus japonicus (Lotus corniculatus var. japonicus).